The following is a 407-amino-acid chain: L-amino-acid oxidase (407 aa).

An intrachain disulfide couples C10 to C94. N-linked (GlcNAc...) asparagine glycosylation is present at N93. H144 is a binding site for substrate. FAD is bound at residue V182. The cysteines at positions 252 and 333 are disulfide-linked. N-linked (GlcNAc...) asparagine glycosylation occurs at N282. Position 293 (Y293) interacts with substrate. FAD is bound by residues E378 and 385–390 (GWIDST). Position 385–386 (385–386 (GW)) interacts with substrate.

It belongs to the flavin monoamine oxidase family. FIG1 subfamily. In terms of assembly, homodimer; non-covalently linked. The cofactor is FAD. As to expression, expressed by the venom gland.

It localises to the secreted. It carries out the reaction an L-alpha-amino acid + O2 + H2O = a 2-oxocarboxylate + H2O2 + NH4(+). It catalyses the reaction L-leucine + O2 + H2O = 4-methyl-2-oxopentanoate + H2O2 + NH4(+). The catalysed reaction is L-phenylalanine + O2 + H2O = 3-phenylpyruvate + H2O2 + NH4(+). The enzyme catalyses L-isoleucine + O2 + H2O = (S)-3-methyl-2-oxopentanoate + H2O2 + NH4(+). It carries out the reaction L-aspartate + O2 + H2O = oxaloacetate + H2O2 + NH4(+). It catalyses the reaction L-lysine + O2 + H2O = 6-amino-2-oxohexanoate + H2O2 + NH4(+). The catalysed reaction is L-glutamate + O2 + H2O = H2O2 + 2-oxoglutarate + NH4(+). Catalyzes an oxidative deamination of predominantly hydrophobic and aromatic L-amino acids, thus producing hydrogen peroxide that may contribute to the diverse toxic effects of this enzyme. Is highly active on L-Leu followed by L-Phe and L-Ile, moderately active on L-Asp, L-Glu, and L-Lys, and not active on L-Pro, L-Asn, L-Gly, L-Ser and L-Cys. Exhibits diverse biological activities such as antibacterial activity (Minimal inhibitory concentrations (MIC) are 9.0 ug/ml against S.aureus, 144.0 ug/ml against P.aeruginosa and 288.0 ug/ml against E.coli) and inhibition of ADP- and TMVA-induced platelet aggregation. Effects of snake L-amino oxidases on platelets are controversial, since they either induce aggregation or inhibit agonist-induced aggregation. These different effects are probably due to different experimental conditions. Unlike other snake venom L-amino acid oxidases, does not induce hemorrhage. This protein may also induce hemolysis, edema, apoptosis and have antiparasitic activities. In Daboia siamensis (Eastern Russel's viper), this protein is L-amino-acid oxidase.